A 467-amino-acid polypeptide reads, in one-letter code: Cytochrome P450 85A3 (467 aa).

The chain crosses the membrane as a helical span at residues 2–22 (AIFLIIFVVFFGFCILSTPLF). Cys-417 contributes to the heme binding site.

The protein belongs to the cytochrome P450 family. It depends on heme as a cofactor. Expressed in fruits.

It localises to the membrane. It carries out the reaction 6-deoxocastasterone + reduced [NADPH--hemoprotein reductase] + O2 = 6alpha-hydroxycastasterone + oxidized [NADPH--hemoprotein reductase] + H2O + H(+). The enzyme catalyses 6alpha-hydroxycastasterone + reduced [NADPH--hemoprotein reductase] + O2 = castasterone + oxidized [NADPH--hemoprotein reductase] + 2 H2O + H(+). The catalysed reaction is castasterone + reduced [NADPH--hemoprotein reductase] + O2 = brassinolide + oxidized [NADPH--hemoprotein reductase] + H2O + H(+). It catalyses the reaction 6-deoxocastasterone + 2 reduced [NADPH--hemoprotein reductase] + 2 O2 = castasterone + 2 oxidized [NADPH--hemoprotein reductase] + 3 H2O + 2 H(+). The protein operates within plant hormone biosynthesis; brassinosteroid biosynthesis. Catalyzes the C6-oxidation step in brassinosteroids biosynthesis. Converts 6-deoxocastasterone (6-deoxoCS) to castasterone (CS), and castasterone (CS) to brassinolide (BL). The chain is Cytochrome P450 85A3 from Solanum lycopersicum (Tomato).